The chain runs to 309 residues: DSC E3 ubiquitin ligase complex subunit C (309 aa).

N-linked (GlcNAc...) asparagine glycosylation occurs at Asn-61. Disordered stretches follow at residues 88-110 (LPPSPSRTPVVQEDATTVKGKGK) and 148-177 (EQADEDYTGRKKQQQPPPSTTSAPRGFDRL). 2 helical membrane-spanning segments follow: residues 257–277 (DDMLWGAVMGFFWPVGCAMWL) and 289–309 (GLAVFVGVVINVAFGAMRIMN).

This sequence belongs to the dsc3 family. In terms of assembly, component of the DSC E3 ubiquitin ligase complex composed of dscA, dscB, dscC and dscD.

Its subcellular location is the endoplasmic reticulum membrane. It functions in the pathway protein modification; protein ubiquitination. Its function is as follows. Component of the DSC E3 ubiquitin ligase complex which is required for the srbA transcriptional activator proteolytic cleavage to release the soluble transcription factor from the membrane in low oxygen or sterol conditions. Required for growth during hypoxia and triazole drug susceptibility, as well as for virulence in a murine model of invasive pulmonary aspergillosis (IPA). This chain is DSC E3 ubiquitin ligase complex subunit C, found in Aspergillus fumigatus (strain ATCC MYA-4609 / CBS 101355 / FGSC A1100 / Af293) (Neosartorya fumigata).